We begin with the raw amino-acid sequence, 135 residues long: uncharacterized protein (135 aa).

The tract at residues 56–135 is disordered; that stretch reads VQSHNRGINN…QKGQLKIEKV (80 aa). Residues 64–74 show a composition bias toward basic residues; sequence NNRRRDQKRKQ. Over residues 77–89 the composition is skewed to polar residues; that stretch reads SIKQDNDLNVSSE. The span at 108-135 shows a compositional bias: basic and acidic residues; the sequence is YKETPDLDEPGSREKRVSQKGQLKIEKV.

This is an uncharacterized protein from Schizosaccharomyces pombe (strain 972 / ATCC 24843) (Fission yeast).